A 470-amino-acid polypeptide reads, in one-letter code: 6-phospho-beta-glucosidase BglB (470 aa).

Glutamate 172 acts as the Proton donor in catalysis. Glutamate 361 (nucleophile) is an active-site residue.

The protein belongs to the glycosyl hydrolase 1 family.

It catalyses the reaction 6-phospho-beta-D-glucosyl-(1-&gt;4)-D-glucose + H2O = D-glucose 6-phosphate + D-glucose. In terms of biological role, catalyzes the hydrolysis of phosphorylated beta-glucosides into glucose-6-phosphate (G-6-P) and aglycone. It has a high affinity for phosphorylated aromatic beta-glucosides (p-nitrophenyl-beta-glucoside, phenyl beta-glucoside, arbutin and phosphorylated salicin), and a low affinity for phosphorylated beta-methyl-glucoside. The chain is 6-phospho-beta-glucosidase BglB (bglB) from Escherichia coli (strain K12).